The following is a 74-amino-acid chain: Protein kish-B (74 aa).

A signal peptide spans 1–22; it reads MTNVYSLDGLLVFALLFVCTCA. Residues 23–52 are Extracellular-facing; that stretch reads YFRKVPRLRSWLLSEKKGVWGVFYKAAVIG. A helical transmembrane segment spans residues 53–73; it reads SRLHLAVSISCIAMAFYVLFI. K74 is a topological domain (cytoplasmic).

It belongs to the KISH family.

Its subcellular location is the golgi apparatus membrane. Involved in the early part of the secretory pathway. The chain is Protein kish-B (tmem167b) from Xenopus laevis (African clawed frog).